The following is a 296-amino-acid chain: Nucleotide-binding protein SGO_0954 (296 aa).

Residue 13-20 (GMSGAGKT) participates in ATP binding. A GTP-binding site is contributed by 63-66 (DMRS).

The protein belongs to the RapZ-like family.

Displays ATPase and GTPase activities. This chain is Nucleotide-binding protein SGO_0954, found in Streptococcus gordonii (strain Challis / ATCC 35105 / BCRC 15272 / CH1 / DL1 / V288).